A 287-amino-acid polypeptide reads, in one-letter code: Homoserine kinase (287 aa).

79-89 serves as a coordination point for ATP; that stretch reads PLARGLGSSSS.

It belongs to the GHMP kinase family. Homoserine kinase subfamily.

It is found in the cytoplasm. It catalyses the reaction L-homoserine + ATP = O-phospho-L-homoserine + ADP + H(+). The protein operates within amino-acid biosynthesis; L-threonine biosynthesis; L-threonine from L-aspartate: step 4/5. In terms of biological role, catalyzes the ATP-dependent phosphorylation of L-homoserine to L-homoserine phosphate. This Enterococcus faecalis (strain ATCC 700802 / V583) protein is Homoserine kinase.